A 737-amino-acid chain; its full sequence is MLCNRLHKAAFAARLRPRLPATVASCRQVHNSDGTISEKRIRNIGILAHIDAGKTTTTERMLYYSGRTDMLGEVKLGNTVTDFLQQERERGITICSAAVSFNWKEYRINLLDTPGHIDFTMEVEQSLGAVDGTVIILDGSAGVEAQTVTVWGQADRHRLPRLVFVNKMDKESADFDACLEDLEKKLSTVPVPLQMPIKEAGKLVGVIDVLSASQIIWDSKGKGRSYKAIPISDEQLHDQVQEKLYELIDLLSGMDDNLAQAIIEANSLENVKLNLVLDALRNCTLKQQIVPVLLGSSYKNVGVQLLMDSVLNFLPAPSERNQIYDLTNSQARIEGDFINVSTFRNDFVGKVFKVTHDKQRGPITMIRAFRGTVKKGSKFITATGGSETIQRIYEPLADEYREIESFGAGNIGLCAGPKSTVTGDLLLLASKLGLQTTIPDAVYFCSIEPPSSGQQSALDNALREIQREDPSLRVRYDEVTGQTVLGGMGQLHLEIVKSRILTEYRIDADLGPLQIAYKETLDEPCRGEWRAEKEIAGSKQSVYMDMTIHPSTASESNEERIVLDNSAEAQETLKLVRPRQMTFFRKGALAALQRGPKLGGQLANCTIKLHALTIGKGTADPFIMAASAQCIGNILANARCRLLEPDMFLEIVTPSEYLPPILADLSRRRARIEDVAPRGSANKVVTVIAPLAELGDYSTVLRTISSGTASVSMEPNGHSPLNESDEAQAMRRALGLE.

A mitochondrion-targeting transit peptide spans 1–36 (MLCNRLHKAAFAARLRPRLPATVASCRQVHNSDGTI). Residues 39–318 (KRIRNIGILA…SVLNFLPAPS (280 aa)) form the tr-type G domain. GTP-binding positions include 48–55 (AHIDAGKT), 112–116 (DTPGH), and 166–169 (NKMD).

The protein belongs to the TRAFAC class translation factor GTPase superfamily. Classic translation factor GTPase family. EF-G/EF-2 subfamily.

Its subcellular location is the mitochondrion. Its function is as follows. Mitochondrial GTPase that mediates the disassembly of ribosomes from messenger RNA at the termination of mitochondrial protein biosynthesis. Not involved in the GTP-dependent ribosomal translocation step during translation elongation. The polypeptide is Ribosome-releasing factor 2, mitochondrial (Anopheles gambiae (African malaria mosquito)).